The primary structure comprises 102 residues: MAEIQTVTAPVFLNQANSSSVNKHTPAEAQETFKQALSQAINNVNDLQKVSAEKTELLAKGKIEDLHDVMITGQKASITLSATVEIRNKVIEAYQEIMRMQV.

The protein belongs to the FliE family.

Its subcellular location is the bacterial flagellum basal body. The chain is Flagellar hook-basal body complex protein FliE from Halalkalibacterium halodurans (strain ATCC BAA-125 / DSM 18197 / FERM 7344 / JCM 9153 / C-125) (Bacillus halodurans).